Here is a 548-residue protein sequence, read N- to C-terminus: Rop guanine nucleotide exchange factor 1 (548 aa).

Over residues 1–12 (MGSLSSEEDDEV) the composition is skewed to acidic residues. The segment at 1–38 (MGSLSSEEDDEVSSERCGSYSPSADISESESSSSFSCH) is disordered. Residues 19–36 (SYSPSADISESESSSSFS) are compositionally biased toward low complexity. In terms of domain architecture, PRONE spans 81-462 (DKQPDNDLSE…DAMRRSISVT (382 aa)). Residues 458-548 (SISVTESLSL…RVTGVTPERD (91 aa)) form an involved in auto-inhibition region. Phosphoserine is present on residues serine 460 and serine 480.

As to quaternary structure, interacts with ARAC10/ROP11 and FER. Forms a complex with ARAC11/ROP1 and PRK2. Interacts in vitro (via PRONE domain) with PRK1, PRK2, PRK3 and PRK4. The C-terminal region is also important for the interaction with PRK2. Post-translationally, phosphorylated at Ser-460 and Ser-480 by PRK2. In terms of tissue distribution, expressed in roots, cotyledons, leaves, stems, sepals, petals, anthers, pollen grains, stigmas and siliques.

It localises to the cytoplasm. The protein localises to the cytosol. Its subcellular location is the cell membrane. With respect to regulation, phosphorylation at Ser-460 and Ser-480 by PRK2 releases ROPGEF1 auto-inhibition, thereby activating ROPGEF1, which in turn activates ARAC11/ROP1. Functionally, guanine-nucleotide exchange factor (GEF) that acts as an activator of Rop (Rho of plants) GTPases by promoting the exchange of GDP for GTP. Acts downstream of PRK2 in the control of polarized pollen tube growth by activating ARAC11/ROP1. In association with ROPGEF4, acts as a specific regulator of ARAC10/ROP11 function in ABA-mediated stomatal closure. May play a role in the Rac/Rop-signaling pathway that controls ROS-mediated root hair development. The polypeptide is Rop guanine nucleotide exchange factor 1 (ROPGEF1) (Arabidopsis thaliana (Mouse-ear cress)).